The primary structure comprises 716 residues: 1,4-alpha-glucan branching enzyme GlgB (716 aa).

D394 functions as the Nucleophile in the catalytic mechanism. E447 acts as the Proton donor in catalysis.

The protein belongs to the glycosyl hydrolase 13 family. GlgB subfamily. In terms of assembly, monomer.

The enzyme catalyses Transfers a segment of a (1-&gt;4)-alpha-D-glucan chain to a primary hydroxy group in a similar glucan chain.. Its pathway is glycan biosynthesis; glycogen biosynthesis. Catalyzes the formation of the alpha-1,6-glucosidic linkages in glycogen by scission of a 1,4-alpha-linked oligosaccharide from growing alpha-1,4-glucan chains and the subsequent attachment of the oligosaccharide to the alpha-1,6 position. The chain is 1,4-alpha-glucan branching enzyme GlgB from Photobacterium profundum (strain SS9).